A 499-amino-acid chain; its full sequence is Proline--tRNA ligase (499 aa).

Belongs to the class-II aminoacyl-tRNA synthetase family. ProS type 3 subfamily. In terms of assembly, homodimer.

It localises to the cytoplasm. The catalysed reaction is tRNA(Pro) + L-proline + ATP = L-prolyl-tRNA(Pro) + AMP + diphosphate. Functionally, catalyzes the attachment of proline to tRNA(Pro) in a two-step reaction: proline is first activated by ATP to form Pro-AMP and then transferred to the acceptor end of tRNA(Pro). This is Proline--tRNA ligase from Bdellovibrio bacteriovorus (strain ATCC 15356 / DSM 50701 / NCIMB 9529 / HD100).